We begin with the raw amino-acid sequence, 259 residues long: Archaerhodopsin-2 (259 aa).

Residues 1-6 constitute a propeptide that is removed on maturation; sequence MDPIAL. A Pyrrolidone carboxylic acid modification is found at Gln-7. At 7–18 the chain is on the extracellular side; it reads QAGFDLLNDGRP. Residues 19–40 traverse the membrane as a helical segment; sequence ETLWLGIGTLLMLIGTFYFIAR. The Cytoplasmic portion of the chain corresponds to 41 to 49; the sequence is GWGVTDKEA. Residues 50–71 form a helical membrane-spanning segment; it reads REYYAITILVPGIASAAYLAMF. Residues 72–90 are Extracellular-facing; it reads FGIGVTEVELASGTVLDIY. Residues 91-112 form a helical membrane-spanning segment; it reads YARYADWLFTTPLLLLDLALLA. At 113–115 the chain is on the cytoplasmic side; sequence KVD. Residues 116–138 traverse the membrane as a helical segment; the sequence is RVTIGTLIGVDALMIVTGLIGAL. At 139 to 142 the chain is on the extracellular side; sequence SKTP. The chain crosses the membrane as a helical span at residues 143–171; sequence LARYTWWLFSTIAFLFVLYYLLTSLRSAA. Topologically, residues 172-174 are cytoplasmic; sequence AKR. A helical membrane pass occupies residues 175–203; it reads SEEVRSTFNTLTALVAVLWTAYPILWIVG. Over 204 to 211 the chain is Extracellular; it reads TEGAGVVG. Residues 212–244 form a helical membrane-spanning segment; it reads LGIETLAFMVLDVTAKVGFGFVLLRSRAILGET. At Lys-227 the chain carries N6-(retinylidene)lysine. At 245 to 259 the chain is on the cytoplasmic side; sequence EAPEPSAGADASAAD.

This sequence belongs to the archaeal/bacterial/fungal opsin family.

The protein localises to the cell membrane. Light-driven proton pump. It may interact with bacterioruberin in the claret membrane. The chain is Archaerhodopsin-2 from Halobacterium sp. (strain aus-2).